The sequence spans 473 residues: Serine incorporator 3 (473 aa).

Residues 1–96 (MGAVLGVFSL…KDCDVLVGYK (96 aa)) lie on the Extracellular side of the membrane. Asn-34 is a glycosylation site (N-linked (GlcNAc...) asparagine). A helical transmembrane segment spans residues 97 to 117 (AVYRISFAMAIFFFVFSLLMF). Topologically, residues 118-132 (KVKTSKDLRAAVHNG) are cytoplasmic. Residues 133–153 (FWFFKIAALIGIMVGSFYIPG) traverse the membrane as a helical segment. Over 154–159 (GYFSSV) the chain is Extracellular. A helical membrane pass occupies residues 160-180 (WFVVGMIGAALFILIQLVLLV). Over 181-203 (DFAHSWNESWVNRMEEGNPRLWY) the chain is Cytoplasmic. The helical transmembrane segment at 204-224 (AALLSFTSAFYILSIICVGLL) threads the bilayer. At 225-239 (YTYYTKPDGCTENKF) the chain is on the extracellular side. A helical membrane pass occupies residues 240 to 260 (FISINLILCVVASIISIHPKI). Residues 261 to 329 (QEHQPRSGLL…VPTPTPPSKS (69 aa)) are Cytoplasmic-facing. Residues 330–350 (GSLLDSDNFIGLFVFVLCLLY) form a helical membrane-spanning segment. Residues 351 to 406 (SSIRTSTNSQVDKLTLSGSDSVILGDTTTSGASDEEDGQPRRAVDNEKEGVQYSYS) are Extracellular-facing. Phosphoserine is present on Ser-371. A helical transmembrane segment spans residues 407–427 (LFHLMLCLASLYIMMTLTSWY). The Cytoplasmic portion of the chain corresponds to 428–446 (SPDAKFQSMTSKWPAVWVK). A helical transmembrane segment spans residues 447–467 (ISSSWVCLLLYVWTLVAPLVL). Topologically, residues 468–473 (TSRDFS) are extracellular.

It belongs to the TDE1 family. N-glycosylated. In terms of tissue distribution, ubiquitous. Expression levels were increased fourfold to tenfold in lung tumor tissues compared with normal pulmonary tissues.

Its subcellular location is the cell membrane. It localises to the golgi apparatus membrane. The protein resides in the cytoplasm. It is found in the perinuclear region. The enzyme catalyses a 1,2-diacyl-sn-glycero-3-phospho-L-serine(in) = a 1,2-diacyl-sn-glycero-3-phospho-L-serine(out). It catalyses the reaction a 1,2-diacyl-sn-glycero-3-phosphocholine(in) = a 1,2-diacyl-sn-glycero-3-phosphocholine(out). The catalysed reaction is a 1,2-diacyl-sn-glycero-3-phosphoethanolamine(in) = a 1,2-diacyl-sn-glycero-3-phosphoethanolamine(out). Its function is as follows. Restriction factor required to restrict infectivity of lentiviruses, such as HIV-1: acts by inhibiting an early step of viral infection. Impairs the penetration of the viral particle into the cytoplasm. Non-ATP-dependent, non-specific lipid transporter for phosphatidylserine, phosphatidylcholine, and phosphatidylethanolamine. Functions as a scramblase that flips lipids in both directions across the membrane. Phospholipid scrambling results in HIV-1 surface exposure of phosphatidylserine and loss of membrane asymmetry, which leads to changes in HIV-1 Env conformation and loss of infectivity. This chain is Serine incorporator 3, found in Homo sapiens (Human).